A 245-amino-acid chain; its full sequence is tRNA (guanine-N(1)-)-methyltransferase (245 aa).

Residues Gly-111 and 131-136 contribute to the S-adenosyl-L-methionine site; that span reads MGDYVL.

It belongs to the RNA methyltransferase TrmD family. In terms of assembly, homodimer.

It is found in the cytoplasm. It carries out the reaction guanosine(37) in tRNA + S-adenosyl-L-methionine = N(1)-methylguanosine(37) in tRNA + S-adenosyl-L-homocysteine + H(+). In terms of biological role, specifically methylates guanosine-37 in various tRNAs. In Staphylococcus epidermidis (strain ATCC 12228 / FDA PCI 1200), this protein is tRNA (guanine-N(1)-)-methyltransferase.